Consider the following 1534-residue polypeptide: DNA-directed RNA polymerase subunit beta'' (1534 aa).

Zn(2+)-binding residues include Cys220, Cys296, Cys303, and Cys306. 2 stretches are compositionally biased toward basic and acidic residues: residues 644-668 (RTQE…RTRE) and 678-688 (PENKYRTREGE). 2 disordered regions span residues 644 to 698 (RTQE…EDEY) and 719 to 800 (YRTL…KKEG). Acidic residues-rich tracts occupy residues 744–762 (GEYE…SSED) and 770–789 (TLEE…EYGS).

Belongs to the RNA polymerase beta' chain family. RpoC2 subfamily. As to quaternary structure, in plastids the minimal PEP RNA polymerase catalytic core is composed of four subunits: alpha, beta, beta', and beta''. When a (nuclear-encoded) sigma factor is associated with the core the holoenzyme is formed, which can initiate transcription. Zn(2+) is required as a cofactor.

It is found in the plastid. Its subcellular location is the chloroplast. It catalyses the reaction RNA(n) + a ribonucleoside 5'-triphosphate = RNA(n+1) + diphosphate. In terms of biological role, DNA-dependent RNA polymerase catalyzes the transcription of DNA into RNA using the four ribonucleoside triphosphates as substrates. The chain is DNA-directed RNA polymerase subunit beta'' from Saccharum officinarum (Sugarcane).